The following is a 586-amino-acid chain: Anaerobic glycerol-3-phosphate dehydrogenase subunit A1 (586 aa).

An FAD-binding site is contributed by 6 to 34 (SVLVIGGGSTGTGIARDLAMRGLDVTLVE). The segment at 559–586 (GGAVADGGRERAADRADDDALGGADGDN) is disordered. Acidic residues predominate over residues 574-586 (ADDDALGGADGDN).

The protein belongs to the FAD-dependent glycerol-3-phosphate dehydrogenase family. Composed of a catalytic GlpA/B dimer and of membrane bound GlpC. The cofactor is FAD. Requires FMN as cofactor.

It localises to the cell membrane. The enzyme catalyses a quinone + sn-glycerol 3-phosphate = dihydroxyacetone phosphate + a quinol. The protein operates within polyol metabolism; glycerol degradation via glycerol kinase pathway; glycerone phosphate from sn-glycerol 3-phosphate (anaerobic route): step 1/1. Its activity is regulated as follows. Up-regulated by glycerol and no inhibition by glucose. In terms of biological role, conversion of glycerol 3-phosphate to dihydroxyacetone phosphate. Required for growth on glycerol and for glycerol metabolism. This is Anaerobic glycerol-3-phosphate dehydrogenase subunit A1 (gpdA1) from Haloferax volcanii (strain ATCC 29605 / DSM 3757 / JCM 8879 / NBRC 14742 / NCIMB 2012 / VKM B-1768 / DS2) (Halobacterium volcanii).